We begin with the raw amino-acid sequence, 273 residues long: MSRIGQTFTALKAQNRKALISFITAGDPGKGLTVPLMHALVDAGTDIIELGVPFSDPMADGPVIQRASERALANKVGLKDVLAMTAEFRKVNTSTPVVLMGYANPFEHMGYETFAEAAKTAGVDGVLTVDIPPEESLGVSDVFKAHDLDPIFLLSPTTPESRVAQVAAVAGGFIYYVSLKGVTGSANLDTEEVARKVAMVRKHCDLPVGVGFGIRDAATAEAVARIADAVVVGSRIVNEIETAPEGECGARVKHLVADLRRGVDAASKQTENK.

Active-site proton acceptor residues include Glu-49 and Asp-60.

It belongs to the TrpA family. Tetramer of two alpha and two beta chains.

The catalysed reaction is (1S,2R)-1-C-(indol-3-yl)glycerol 3-phosphate + L-serine = D-glyceraldehyde 3-phosphate + L-tryptophan + H2O. The protein operates within amino-acid biosynthesis; L-tryptophan biosynthesis; L-tryptophan from chorismate: step 5/5. Its function is as follows. The alpha subunit is responsible for the aldol cleavage of indoleglycerol phosphate to indole and glyceraldehyde 3-phosphate. This is Tryptophan synthase alpha chain from Thiobacillus denitrificans (strain ATCC 25259 / T1).